A 741-amino-acid chain; its full sequence is Copper-transporting ATPase (741 aa).

The HMA domain maps to 1–67; it reads MKESFYIEGM…LIEKLGYSPK (67 aa). Over 1–83 the chain is Cytoplasmic; it reads MKESFYIEGM…KKEFFSPNVK (83 aa). The Cu cation site is built by Cys12 and Cys15. Residues 84–104 traverse the membrane as a helical segment; it reads LALAVIFTLFVVYLSMGAMLS. At 105-124 the chain is on the extracellular side; the sequence is PSLLPESLLTINNHSNFLNA. A helical transmembrane segment spans residues 125 to 144; the sequence is CLQLIGTLIVMHLGRDFYIQ. Over 145–151 the chain is Cytoplasmic; it reads GFKALWH. A helical transmembrane segment spans residues 152-172; sequence RQPNMSSLIAIGTSAALISSL. At 173–190 the chain is on the extracellular side; that stretch reads WQLYFVYTSQWSYGHYYF. The helical transmembrane segment at 191–211 threads the bilayer; sequence ESVCVILMFVMVGKRIENVSK. Residues 212 to 339 are Cytoplasmic-facing; the sequence is DKALDAMQAL…KAEISRLADK (128 aa). Residues 340 to 362 form a helical membrane-spanning segment; it reads VSSVFVPSVIAIAILAFVVWLII. Topologically, residues 363-375 are extracellular; sequence APKPDFWWNFGIA. The helical transmembrane segment at 376-393 threads the bilayer; sequence LEVFVSVLVISCPCALGL. Over 394–681 the chain is Cytoplasmic; it reads ATPMSILVAN…KLSQATIKNI (288 aa). Catalysis depends on Asp431, which acts as the 4-aspartylphosphate intermediate. Mg(2+) contacts are provided by Asp627 and Asp631. Residues 682 to 701 traverse the membrane as a helical segment; the sequence is KENLFWAFCYNSVFIPLACG. Topologically, residues 702 to 712 are extracellular; sequence VLYKANIMLSP. Residues 713-731 form a helical membrane-spanning segment; the sequence is AIAGLAMSLSSVSVVLNSQ. Topologically, residues 732-741 are cytoplasmic; that stretch reads RLRNFKIKDH.

This sequence belongs to the cation transport ATPase (P-type) (TC 3.A.3) family. Type IB subfamily.

Its subcellular location is the cell membrane. The catalysed reaction is Cu(2+)(in) + ATP + H2O = Cu(2+)(out) + ADP + phosphate + H(+). Probably involved in copper export. In Helicobacter pylori (Campylobacter pylori), this protein is Copper-transporting ATPase (copA).